The following is a 726-amino-acid chain: Elongation factor 2 (726 aa).

A tr-type G domain is found at 19–260; the sequence is DRIRNIGICA…MVIKHLPSPP (242 aa). GTP is bound by residues 28 to 35, 94 to 98, and 148 to 151; these read AHIDHGKT, DTPGH, and NKVD. Position 602 is a diphthamide (histidine 602).

The protein belongs to the TRAFAC class translation factor GTPase superfamily. Classic translation factor GTPase family. EF-G/EF-2 subfamily.

It localises to the cytoplasm. In terms of biological role, catalyzes the GTP-dependent ribosomal translocation step during translation elongation. During this step, the ribosome changes from the pre-translocational (PRE) to the post-translocational (POST) state as the newly formed A-site-bound peptidyl-tRNA and P-site-bound deacylated tRNA move to the P and E sites, respectively. Catalyzes the coordinated movement of the two tRNA molecules, the mRNA and conformational changes in the ribosome. The chain is Elongation factor 2 (fusA) from Methanocaldococcus jannaschii (strain ATCC 43067 / DSM 2661 / JAL-1 / JCM 10045 / NBRC 100440) (Methanococcus jannaschii).